The primary structure comprises 299 residues: 4-diphosphocytidyl-2-C-methyl-D-erythritol kinase (299 aa).

Lys-11 is an active-site residue. 94 to 104 (PQGGGLGGGSS) is an ATP binding site. Asp-136 is a catalytic residue.

The protein belongs to the GHMP kinase family. IspE subfamily.

It carries out the reaction 4-CDP-2-C-methyl-D-erythritol + ATP = 4-CDP-2-C-methyl-D-erythritol 2-phosphate + ADP + H(+). The protein operates within isoprenoid biosynthesis; isopentenyl diphosphate biosynthesis via DXP pathway; isopentenyl diphosphate from 1-deoxy-D-xylulose 5-phosphate: step 3/6. Its function is as follows. Catalyzes the phosphorylation of the position 2 hydroxy group of 4-diphosphocytidyl-2C-methyl-D-erythritol. This Bordetella parapertussis (strain 12822 / ATCC BAA-587 / NCTC 13253) protein is 4-diphosphocytidyl-2-C-methyl-D-erythritol kinase.